The sequence spans 150 residues: Phosphoribosyl-AMP cyclohydrolase (150 aa).

Asp93 serves as a coordination point for Mg(2+). Position 94 (Cys94) interacts with Zn(2+). 2 residues coordinate Mg(2+): Asp95 and Asp97. Positions 112 and 119 each coordinate Zn(2+).

Belongs to the PRA-CH family. Homodimer. Requires Mg(2+) as cofactor. It depends on Zn(2+) as a cofactor.

It is found in the cytoplasm. It catalyses the reaction 1-(5-phospho-beta-D-ribosyl)-5'-AMP + H2O = 1-(5-phospho-beta-D-ribosyl)-5-[(5-phospho-beta-D-ribosylamino)methylideneamino]imidazole-4-carboxamide. The protein operates within amino-acid biosynthesis; L-histidine biosynthesis; L-histidine from 5-phospho-alpha-D-ribose 1-diphosphate: step 3/9. Its function is as follows. Catalyzes the hydrolysis of the adenine ring of phosphoribosyl-AMP. The polypeptide is Phosphoribosyl-AMP cyclohydrolase (Rhizobium etli (strain ATCC 51251 / DSM 11541 / JCM 21823 / NBRC 15573 / CFN 42)).